The primary structure comprises 92 residues: C-C motif chemokine 3 (92 aa).

An N-terminal signal peptide occupies residues 1 to 23 (MQVSTAALAVLLCTMALCNQFSA). 2 cysteine pairs are disulfide-bonded: C33-C57 and C34-C73.

The protein belongs to the intercrine beta (chemokine CC) family. As to quaternary structure, self-associates. Also heterodimer of MIP-1-alpha(4-69) and MIP-1-beta(3-69). Interacts with CCR1.

Its subcellular location is the secreted. Monokine with inflammatory and chemokinetic properties. Binds to CCR1, CCR4 and CCR5. One of the major HIV-suppressive factors produced by CD8+ T-cells. Recombinant MIP-1-alpha induces a dose-dependent inhibition of different strains of HIV-1, HIV-2, and simian immunodeficiency virus (SIV). This is C-C motif chemokine 3 (CCL3) from Pan troglodytes (Chimpanzee).